We begin with the raw amino-acid sequence, 270 residues long: Formamidopyrimidine-DNA glycosylase (270 aa).

P2 functions as the Schiff-base intermediate with DNA in the catalytic mechanism. E3 serves as the catalytic Proton donor. K58 acts as the Proton donor; for beta-elimination activity in catalysis. Positions 90, 109, and 152 each coordinate DNA. Residues 237–270 (RVYGREGEPCHCGTVIRRRVDGGRSTFYCPKCQK) form an FPG-type zinc finger. R260 serves as the catalytic Proton donor; for delta-elimination activity.

This sequence belongs to the FPG family. As to quaternary structure, monomer. Requires Zn(2+) as cofactor.

The enzyme catalyses Hydrolysis of DNA containing ring-opened 7-methylguanine residues, releasing 2,6-diamino-4-hydroxy-5-(N-methyl)formamidopyrimidine.. It catalyses the reaction 2'-deoxyribonucleotide-(2'-deoxyribose 5'-phosphate)-2'-deoxyribonucleotide-DNA = a 3'-end 2'-deoxyribonucleotide-(2,3-dehydro-2,3-deoxyribose 5'-phosphate)-DNA + a 5'-end 5'-phospho-2'-deoxyribonucleoside-DNA + H(+). Involved in base excision repair of DNA damaged by oxidation or by mutagenic agents. Acts as a DNA glycosylase that recognizes and removes damaged bases. Has a preference for oxidized purines, such as 7,8-dihydro-8-oxoguanine (8-oxoG). Has AP (apurinic/apyrimidinic) lyase activity and introduces nicks in the DNA strand. Cleaves the DNA backbone by beta-delta elimination to generate a single-strand break at the site of the removed base with both 3'- and 5'-phosphates. The chain is Formamidopyrimidine-DNA glycosylase from Rhizorhabdus wittichii (strain DSM 6014 / CCUG 31198 / JCM 15750 / NBRC 105917 / EY 4224 / RW1) (Sphingomonas wittichii).